Reading from the N-terminus, the 187-residue chain is Large ribosomal subunit protein uL5 (187 aa).

The protein belongs to the universal ribosomal protein uL5 family. Part of the 50S ribosomal subunit; part of the 5S rRNA/L5/L18/L25 subcomplex. Contacts the 5S rRNA and the P site tRNA. Forms a bridge to the 30S subunit in the 70S ribosome.

This is one of the proteins that bind and probably mediate the attachment of the 5S RNA into the large ribosomal subunit, where it forms part of the central protuberance. In the 70S ribosome it contacts protein S13 of the 30S subunit (bridge B1b), connecting the 2 subunits; this bridge is implicated in subunit movement. Contacts the P site tRNA; the 5S rRNA and some of its associated proteins might help stabilize positioning of ribosome-bound tRNAs. This Saccharopolyspora erythraea (strain ATCC 11635 / DSM 40517 / JCM 4748 / NBRC 13426 / NCIMB 8594 / NRRL 2338) protein is Large ribosomal subunit protein uL5.